Reading from the N-terminus, the 353-residue chain is ATP-dependent kinase YFH7 (353 aa).

Residue 31 to 39 (GSPGSGKST) participates in ATP binding.

It belongs to the YFH7 family.

In terms of biological role, ATP-dependent kinase that could be involved in endoplasmic reticulum membrane assembly. The sequence is that of ATP-dependent kinase YFH7 (YFH7) from Saccharomyces cerevisiae (strain JAY291) (Baker's yeast).